The chain runs to 141 residues: Hemoglobin subunit alpha (141 aa).

One can recognise a Globin domain in the interval 1–141 (VLSPDDKKHV…VSTVLTSKYR (141 aa)). S3 is modified (phosphoserine). N6-succinyllysine occurs at positions 7 and 11. The residue at position 16 (K16) is an N6-acetyllysine; alternate. K16 carries the post-translational modification N6-succinyllysine; alternate. The residue at position 24 (Y24) is a Phosphotyrosine. S35 is subject to Phosphoserine. Position 40 is an N6-succinyllysine (K40). Phosphoserine is present on S49. H58 lines the O2 pocket. Residue H87 coordinates heme b. At S102 the chain carries Phosphoserine. T108 bears the Phosphothreonine mark. S124 and S131 each carry phosphoserine. 2 positions are modified to phosphothreonine: T134 and T137. S138 is subject to Phosphoserine.

The protein belongs to the globin family. Heterotetramer of two alpha chains and two beta chains. Red blood cells.

In terms of biological role, involved in oxygen transport from the lung to the various peripheral tissues. Its function is as follows. Hemopressin acts as an antagonist peptide of the cannabinoid receptor CNR1. Hemopressin-binding efficiently blocks cannabinoid receptor CNR1 and subsequent signaling. This chain is Hemoglobin subunit alpha (HBA), found in Theropithecus gelada (Gelada baboon).